A 504-amino-acid chain; its full sequence is Protein phosphatase 1J (504 aa).

Disordered regions lie at residues M1–W102 and P194–S217. Residues S14 to S23 are compositionally biased toward low complexity. The residue at position 41 (T41) is a Phosphothreonine. A compositionally biased stretch (polar residues) spans T59 to Q73. Residues S65 and S75 each carry the phosphoserine modification. The PPM-type phosphatase domain maps to S103–L496. The segment covering L197–S217 has biased composition (low complexity).

It belongs to the PP2C family. In terms of assembly, interacts with UBE2I/UBC9.

It catalyses the reaction O-phospho-L-seryl-[protein] + H2O = L-seryl-[protein] + phosphate. It carries out the reaction O-phospho-L-threonyl-[protein] + H2O = L-threonyl-[protein] + phosphate. This is Protein phosphatase 1J (Ppm1j) from Rattus norvegicus (Rat).